Reading from the N-terminus, the 152-residue chain is Ribosome maturation factor RimP (152 aa).

Belongs to the RimP family.

The protein resides in the cytoplasm. Required for maturation of 30S ribosomal subunits. The sequence is that of Ribosome maturation factor RimP from Burkholderia cenocepacia (strain ATCC BAA-245 / DSM 16553 / LMG 16656 / NCTC 13227 / J2315 / CF5610) (Burkholderia cepacia (strain J2315)).